A 144-amino-acid chain; its full sequence is MQTQRASLSLGRWSLWLLLLGLVVPSASAQALSYREAVLRAVDQLNELSSEANLYRLLELDPPPKDNEDLGTRKPVSFTVKETVCPRTIQQPAEQCDFKEKGRVKQCVGTVTLDPSNDQFDLNCNELQSVILPWKWPWWPWRRG.

A signal peptide spans 1–29; that stretch reads MQTQRASLSLGRWSLWLLLLGLVVPSASA. Positions 30-130 are excised as a propeptide; sequence QALSYREAVL…DLNCNELQSV (101 aa). 2 disulfides stabilise this stretch: C85-C96 and C107-C124. Residue R143 is modified to Arginine amide.

Belongs to the cathelicidin family. In terms of processing, elastase might be responsible for its maturation. Large granules of neutrophils.

It localises to the secreted. In terms of biological role, potent microbicidal activity; active against S.aureus and E.coli. The protein is Cathelicidin-4 (CATHL4) of Bos taurus (Bovine).